A 547-amino-acid polypeptide reads, in one-letter code: MNNKKLKSKFIFITGGVVSSLGKGITAASIGNILKNRGFKVSIQKLDPYINIDPGTMSPYQHGEVFVTNDGAETDLDLGHYERFLDENMSKSSNITAGQIYQSVINKEREGKYLGKTVQVIPHITEEIKKKIIKAAIVHQSDIVIVEIGGTVGDIESAPFLEAIRQFRYEVGYHNVLYLHTTLVPYLKKAQEIKTKPTQHSVKELRALGIQPQILVLRSEISINKEIKNKIASLCDINPQAIFEALDVDILYQIILNLFEQRIDHFILNHFQLPNNIQIDLKDWRSLINCIQNLKEKVVIGLVGKYVILHDAYLSIVESLKHAAYYYNSDIEIKWIDSEKLNSTNVKTLLNDCDGILVPHGFGPRAIEGKILAIQYAREQKIPFFGICFGMQLAVVEYARNVLFLDGANSTEIDEKTPHPVITKKIKNSNLGGTLRLGSYRCCLQKNSKSEAIYQQTTIYERHRHRFEMNPSYVSLFEKNNDFLVSGFNPEKNLAEIIELKNHPWFMAVQFHPEFLSRPLKPHPLFKSFVEAALLKNGKNIKKSKLS.

Residues 1–273 (MNNKKLKSKF…DHFILNHFQL (273 aa)) form an amidoligase domain region. S19 contacts CTP. S19 contacts UTP. 20-25 (SLGKGI) provides a ligand contact to ATP. Y60 serves as a coordination point for L-glutamine. An ATP-binding site is contributed by D77. Mg(2+) is bound by residues D77 and E147. CTP-binding positions include 154-156 (DIE), 194-199 (KTKPTQ), and K230. Residues 194 to 199 (KTKPTQ) and K230 contribute to the UTP site. One can recognise a Glutamine amidotransferase type-1 domain in the interval 306-539 (YVILHDAYLS…VEAALLKNGK (234 aa)). An L-glutamine-binding site is contributed by G361. The active-site Nucleophile; for glutamine hydrolysis is the C388. L-glutamine contacts are provided by residues 389-392 (FGMQ), E412, and R466. Active-site residues include H512 and E514.

This sequence belongs to the CTP synthase family. As to quaternary structure, homotetramer.

It catalyses the reaction UTP + L-glutamine + ATP + H2O = CTP + L-glutamate + ADP + phosphate + 2 H(+). The catalysed reaction is L-glutamine + H2O = L-glutamate + NH4(+). The enzyme catalyses UTP + NH4(+) + ATP = CTP + ADP + phosphate + 2 H(+). It participates in pyrimidine metabolism; CTP biosynthesis via de novo pathway; CTP from UDP: step 2/2. With respect to regulation, allosterically activated by GTP, when glutamine is the substrate; GTP has no effect on the reaction when ammonia is the substrate. The allosteric effector GTP functions by stabilizing the protein conformation that binds the tetrahedral intermediate(s) formed during glutamine hydrolysis. Inhibited by the product CTP, via allosteric rather than competitive inhibition. In terms of biological role, catalyzes the ATP-dependent amination of UTP to CTP with either L-glutamine or ammonia as the source of nitrogen. Regulates intracellular CTP levels through interactions with the four ribonucleotide triphosphates. The polypeptide is CTP synthase (Phytoplasma australiense).